The chain runs to 314 residues: Aryldialkylphosphatase (314 aa).

Residues His22, His24, and Lys137 each contribute to the Fe cation site. Co(2+) contacts are provided by Lys137, His170, and His199. Lys137 bears the N6-carboxylysine mark. Asp256 serves as a coordination point for Fe cation.

This sequence belongs to the metallo-dependent hydrolases superfamily. Phosphotriesterase family. In terms of assembly, homodimer. The cofactor is Co(2+). It depends on Fe cation as a cofactor.

It catalyses the reaction An aryl dialkyl phosphate + H2O = dialkyl phosphate + an aryl alcohol.. With respect to regulation, inactivated by EDTA and o-phenanthroline. In terms of biological role, has a low paraoxonase activity. Also active, but with a lower activity, against other organo-phosphorus insecticides such as Dursban, Coumaphos, pNP-butanoate or parathion. This Saccharolobus solfataricus (strain ATCC 35092 / DSM 1617 / JCM 11322 / P2) (Sulfolobus solfataricus) protein is Aryldialkylphosphatase (php).